The sequence spans 231 residues: dTTP/UTP pyrophosphatase (231 aa).

Catalysis depends on aspartate 85, which acts as the Proton acceptor.

The protein belongs to the Maf family. YhdE subfamily. The cofactor is a divalent metal cation.

It is found in the cytoplasm. The catalysed reaction is dTTP + H2O = dTMP + diphosphate + H(+). It carries out the reaction UTP + H2O = UMP + diphosphate + H(+). Its function is as follows. Nucleoside triphosphate pyrophosphatase that hydrolyzes dTTP and UTP. May have a dual role in cell division arrest and in preventing the incorporation of modified nucleotides into cellular nucleic acids. This is dTTP/UTP pyrophosphatase from Psychrobacter arcticus (strain DSM 17307 / VKM B-2377 / 273-4).